A 964-amino-acid chain; its full sequence is Protein translocase subunit SecA (964 aa).

Residues Gln-86, 104 to 108 (GEGKT), and Asp-494 contribute to the ATP site. Residues 848-964 (AESADTIAVA…YKMCHGQNEK (117 aa)) form a disordered region. Acidic residues predominate over residues 871-882 (AEGEVEEEDEDT). A compositionally biased stretch (low complexity) spans 889–900 (AESAAASGAGES). Zn(2+)-binding residues include Cys-947, Cys-949, Cys-958, and His-959.

It belongs to the SecA family. Monomer and homodimer. Part of the essential Sec protein translocation apparatus which comprises SecA, SecYEG and auxiliary proteins SecDF. Other proteins may also be involved. The cofactor is Zn(2+).

It is found in the cell membrane. The protein localises to the cytoplasm. The enzyme catalyses ATP + H2O + cellular proteinSide 1 = ADP + phosphate + cellular proteinSide 2.. Functionally, part of the Sec protein translocase complex. Interacts with the SecYEG preprotein conducting channel. Has a central role in coupling the hydrolysis of ATP to the transfer of proteins into and across the cell membrane, serving as an ATP-driven molecular motor driving the stepwise translocation of polypeptide chains across the membrane. This is Protein translocase subunit SecA from Bifidobacterium longum (strain NCC 2705).